A 234-amino-acid polypeptide reads, in one-letter code: MRLVQLSRHSIAFPSPEGALREPNGLLALGGDLSPARLLMAYQHGIFPWFSPGDPILWWSPDPRAVLWPEKFHLSRSMKRFHNASPYRVTLNYAFDRVIDGCANHRDEGTWITRGIEEAYRRLHELGHAHSIEVWRDQELVGGMYGVSQGALFCGESMFSRQENASKTALLVFCAEFIRHGGKLIDCQVLNSHTASLGAIEIPRRDYLDHLAGLRQQPLASRFWVPRTLFLPRK.

It belongs to the L/F-transferase family.

It is found in the cytoplasm. It catalyses the reaction N-terminal L-lysyl-[protein] + L-leucyl-tRNA(Leu) = N-terminal L-leucyl-L-lysyl-[protein] + tRNA(Leu) + H(+). The catalysed reaction is N-terminal L-arginyl-[protein] + L-leucyl-tRNA(Leu) = N-terminal L-leucyl-L-arginyl-[protein] + tRNA(Leu) + H(+). It carries out the reaction L-phenylalanyl-tRNA(Phe) + an N-terminal L-alpha-aminoacyl-[protein] = an N-terminal L-phenylalanyl-L-alpha-aminoacyl-[protein] + tRNA(Phe). Its function is as follows. Functions in the N-end rule pathway of protein degradation where it conjugates Leu, Phe and, less efficiently, Met from aminoacyl-tRNAs to the N-termini of proteins containing an N-terminal arginine or lysine. In Salmonella paratyphi A (strain ATCC 9150 / SARB42), this protein is Leucyl/phenylalanyl-tRNA--protein transferase.